A 98-amino-acid chain; its full sequence is DNA-binding protein HU (98 aa).

Belongs to the bacterial histone-like protein family. Homodimer.

Its function is as follows. Histone-like DNA-binding protein which is capable of wrapping DNA to stabilize it, and thus to prevent its denaturation under extreme environmental conditions. The protein is DNA-binding protein HU (hup) of Campylobacter jejuni subsp. jejuni serotype O:2 (strain ATCC 700819 / NCTC 11168).